We begin with the raw amino-acid sequence, 487 residues long: Beta-barrel assembly-enhancing protease (487 aa).

Residues 1–27 form the signal peptide; the sequence is MFRQLKKNLVATLIAAMTIGQVAPAFA. His136 contributes to the Zn(2+) binding site. Glu137 is a catalytic residue. Positions 140 and 201 each coordinate Zn(2+). Catalysis depends on Asp205, which acts as the Proton donor. 4 TPR repeats span residues 309–342, 344–376, 377–409, and 427–460; these read RAAQYGRALQAMEANKYDEARKTLQPLLAAEPGN, WYLDLATDIDLGQNKANEAINRLKNARDLRTNP, VLQLNLANAYLQGGQPQEAANILNRYTFNNKDD, and DQELAARAEGYALAGRLDQAISLLSSASSQVKLG.

The protein belongs to the peptidase M48 family. BepA subfamily. The cofactor is Zn(2+).

The protein localises to the periplasm. Functionally, functions both as a chaperone and a metalloprotease. Maintains the integrity of the outer membrane by promoting either the assembly or the elimination of outer membrane proteins, depending on their folding state. This is Beta-barrel assembly-enhancing protease from Escherichia coli O157:H7.